A 312-amino-acid polypeptide reads, in one-letter code: Olfactory receptor 10C1 (312 aa).

Residues 1 to 24 are Extracellular-facing; that stretch reads MSANTSMVTEFLLLGFSHLADLQG. N-linked (GlcNAc...) asparagine glycosylation occurs at N4. The helical transmembrane segment at 25–45 threads the bilayer; it reads LLFSVFLTIYLLTVAGNFLIV. The Cytoplasmic segment spans residues 46–53; that stretch reads VLVSTDAA. A helical transmembrane segment spans residues 54–74; it reads LQSPMYFFLRTLSALEIGYTS. At 75 to 98 the chain is on the extracellular side; it reads VTVPLLLHHLLTGRRHISRSGCAL. A disulfide bridge connects residues C96 and C188. The helical transmembrane segment at 99–119 threads the bilayer; it reads QMFFFLFFGATECCLLAAMAY. Residues 120–138 are Cytoplasmic-facing; sequence DRYAAICEPLRYPLLLSHR. Residues 139 to 159 form a helical membrane-spanning segment; sequence VCLQLAGSAWACGVLVGLGHT. The Extracellular segment spans residues 160 to 196; that stretch reads PFIFSLPFCGPNTIPQFFCEIQPVLQLVCGDTSLNEL. The helical transmembrane segment at 197-216 threads the bilayer; it reads QIILATALLILCPFGLILGS. The Cytoplasmic segment spans residues 217 to 236; the sequence is YGRILVTIFRIPSVAGRRKA. The helical transmembrane segment at 237-257 threads the bilayer; sequence FSTCSSHLIMVSLFYGTALFI. The Extracellular portion of the chain corresponds to 258–270; sequence YIRPKASYDPATD. A helical membrane pass occupies residues 271-291; that stretch reads PLVSLFYAVVTPILNPIIYSL. Over 292–312 the chain is Cytoplasmic; that stretch reads RNTEVKAALKRTIQKTVPMEI.

This sequence belongs to the G-protein coupled receptor 1 family.

The protein resides in the cell membrane. Odorant receptor. The protein is Olfactory receptor 10C1 (OR10C1) of Homo sapiens (Human).